The sequence spans 172 residues: Disulfide bond formation protein B (172 aa).

The Cytoplasmic portion of the chain corresponds to 1–11; the sequence is MNPFRWSFRAQ. The helical transmembrane segment at 12–28 threads the bilayer; it reads FLLGFLACAGLLAYAIY. Residues 29 to 46 are Periplasmic-facing; it reads VQLHLGLEPCPLCIFQRI. C38 and C41 form a disulfide bridge. The helical transmembrane segment at 47–63 threads the bilayer; that stretch reads AFAALAVFFLIGALHGP. Over 64–70 the chain is Cytoplasmic; it reads RAAGARK. Residues 71–88 traverse the membrane as a helical segment; that stretch reads VYGVLSFIAAGVGMGIGA. Residues 89-145 are Periplasmic-facing; that stretch reads RHVWVQIRPKDMMSSCGPPLSFLSETMGPFEVFRTVLTGTGDCGNIDWRFLGLSMPM. Cysteines 104 and 131 form a disulfide. The helical transmembrane segment at 146-164 threads the bilayer; sequence WSMVWFVGLALWALSAGFK. Residues 165–172 are Cytoplasmic-facing; that stretch reads ARRSSLHH.

Belongs to the DsbB family.

The protein resides in the cell inner membrane. Its function is as follows. Required for disulfide bond formation in some periplasmic proteins. Acts by oxidizing the DsbA protein. The sequence is that of Disulfide bond formation protein B from Xanthomonas oryzae pv. oryzae (strain MAFF 311018).